The primary structure comprises 900 residues: Alanine--tRNA ligase (900 aa).

4 residues coordinate Zn(2+): H587, H591, C691, and H695.

Belongs to the class-II aminoacyl-tRNA synthetase family. It depends on Zn(2+) as a cofactor.

The protein resides in the cytoplasm. The enzyme catalyses tRNA(Ala) + L-alanine + ATP = L-alanyl-tRNA(Ala) + AMP + diphosphate. Its function is as follows. Catalyzes the attachment of alanine to tRNA(Ala) in a two-step reaction: alanine is first activated by ATP to form Ala-AMP and then transferred to the acceptor end of tRNA(Ala). Also edits incorrectly charged Ser-tRNA(Ala) and Gly-tRNA(Ala) via its editing domain. The protein is Alanine--tRNA ligase of Aeropyrum pernix (strain ATCC 700893 / DSM 11879 / JCM 9820 / NBRC 100138 / K1).